The primary structure comprises 455 residues: F-box/FBD/LRR-repeat protein At3g51530 (455 aa).

The segment at M1 to F26 is disordered. The 47-residue stretch at E29 to E75 folds into the F-box domain. 6 LRR repeats span residues I80 to V106, E155 to S182, V183 to R208, T227 to S257, I277 to L302, and T325 to D351. Residues K370–T417 form the FBD domain.

This Arabidopsis thaliana (Mouse-ear cress) protein is F-box/FBD/LRR-repeat protein At3g51530.